Here is a 124-residue protein sequence, read N- to C-terminus: MPTIQQLVRKGRRDKIGKVKTAALKGNPQRRGVCTRVYTSTPKKPNSALRKVARVKLTSQVEVTAYIPGEGHNLQEHSMVLVRGGRVKDLPGVRYKIIRGSLDTQGVKNRKQARSRYGAKKEKS.

Position 89 is a 3-methylthioaspartic acid (D89). Residues 105–124 (QGVKNRKQARSRYGAKKEKS) form a disordered region. Over residues 108-118 (KNRKQARSRYG) the composition is skewed to basic residues.

The protein belongs to the universal ribosomal protein uS12 family. Part of the 30S ribosomal subunit. Contacts proteins S8 and S17. May interact with IF1 in the 30S initiation complex.

With S4 and S5 plays an important role in translational accuracy. Functionally, interacts with and stabilizes bases of the 16S rRNA that are involved in tRNA selection in the A site and with the mRNA backbone. Located at the interface of the 30S and 50S subunits, it traverses the body of the 30S subunit contacting proteins on the other side and probably holding the rRNA structure together. The combined cluster of proteins S8, S12 and S17 appears to hold together the shoulder and platform of the 30S subunit. The chain is Small ribosomal subunit protein uS12 from Mycobacterium leprae (strain Br4923).